Reading from the N-terminus, the 586-residue chain is Laccase-9 (586 aa).

Residues 1–25 (MPRVHHSLSNQAFLVLLLFSSIASA) form the signal peptide. 2 consecutive Plastocyanin-like domains span residues 33-149 (HVKD…PRSG) and 159-307 (KEVP…YEGA). N-linked (GlcNAc...) asparagine glycans are attached at residues N52, N74, and N79. 2 residues coordinate Cu cation: H83 and H85. N111 is a glycosylation site (N-linked (GlcNAc...) asparagine). The Cu cation site is built by H128 and H130. N236, N333, N385, N403, and N451 each carry an N-linked (GlcNAc...) asparagine glycan. The Plastocyanin-like 3 domain occupies 411–552 (DFPDQPPLKF…MMAFIVQNGP (142 aa)). The Cu cation site is built by H469, H472, H474, H531, C532, H533, and H537.

Belongs to the multicopper oxidase family. It depends on Cu cation as a cofactor. Predominantly expressed in roots.

It localises to the secreted. The protein localises to the extracellular space. It is found in the apoplast. It carries out the reaction 4 hydroquinone + O2 = 4 benzosemiquinone + 2 H2O. Lignin degradation and detoxification of lignin-derived products. The sequence is that of Laccase-9 (LAC9) from Arabidopsis thaliana (Mouse-ear cress).